The chain runs to 37 residues: Large ribosomal subunit protein bL36 (37 aa).

This sequence belongs to the bacterial ribosomal protein bL36 family.

The polypeptide is Large ribosomal subunit protein bL36 (Geobacter metallireducens (strain ATCC 53774 / DSM 7210 / GS-15)).